The primary structure comprises 1958 residues: Probable Rho GTPase-activating protein CG5521 (1958 aa).

Disordered regions lie at residues 1 to 21, 400 to 424, and 635 to 804; these read MFTK…QDSK, PPFL…RSQR, and GSVW…GIEG. The span at 400 to 414 shows a compositional bias: pro residues; it reads PPFLLEPNDDPPPPS. Low complexity predominate over residues 640–656; sequence GSGSNSAANGGSAASAA. A phosphoserine mark is found at Ser718, Ser764, and Ser767. Residues 758 to 774 show a composition bias toward basic and acidic residues; that stretch reads DLRRAMSLDSLARKGDA. The segment covering 775 to 785 has biased composition (acidic residues); it reads EETDSYQEGDN. Ser787, Ser791, Ser793, and Ser795 each carry phosphoserine. The span at 788-800 shows a compositional bias: polar residues; that stretch reads GAGSRSPSPTASS. A Phosphotyrosine modification is found at Tyr980. The segment at 1534–1568 is disordered; sequence HSTQAPSPALRHASSNSSLQQPDQRSLHSTTASFD. Positions 1546 to 1568 are enriched in polar residues; sequence ASSNSSLQQPDQRSLHSTTASFD. Ser1551 is subject to Phosphoserine. Positions 1612 to 1819 constitute a Rap-GAP domain; it reads LRNVDLQKCR…EERNRSLDSV (208 aa). The segment at 1903-1958 is disordered; sequence ATGMSSASPRGPRKLGAPFKSVTKKHSLQHIAVGGGAGAGGDTPPESPTLPQRRFK. Thr1945 carries the phosphothreonine modification. Residue Ser1949 is modified to Phosphoserine.

This is Probable Rho GTPase-activating protein CG5521 from Drosophila melanogaster (Fruit fly).